The following is a 224-amino-acid chain: 7-cyano-7-deazaguanine synthase (224 aa).

ATP is bound at residue 14–24 (FSGGQDSTTCL). 4 residues coordinate Zn(2+): C190, C198, C201, and C204.

This sequence belongs to the QueC family. Requires Zn(2+) as cofactor.

It carries out the reaction 7-carboxy-7-deazaguanine + NH4(+) + ATP = 7-cyano-7-deazaguanine + ADP + phosphate + H2O + H(+). Its pathway is purine metabolism; 7-cyano-7-deazaguanine biosynthesis. Its function is as follows. Catalyzes the ATP-dependent conversion of 7-carboxy-7-deazaguanine (CDG) to 7-cyano-7-deazaguanine (preQ(0)). This chain is 7-cyano-7-deazaguanine synthase, found in Haemophilus ducreyi (strain 35000HP / ATCC 700724).